A 190-amino-acid chain; its full sequence is Putative glutathione-dependent formaldehyde-activating enzyme (190 aa).

The region spanning 19–165 (FKGGKLYCHC…FRKEGLQTYD (147 aa)) is the CENP-V/GFA domain. C26, C28, C47, C49, C52, C94, and C97 together coordinate Zn(2+).

It belongs to the Gfa family. Zn(2+) serves as cofactor.

It carries out the reaction S-(hydroxymethyl)glutathione = glutathione + formaldehyde. It functions in the pathway one-carbon metabolism; formaldehyde degradation; formate from formaldehyde (glutathione route): step 1/3. Functionally, catalyzes the condensation of formaldehyde and glutathione to S-hydroxymethylglutathione. This is Putative glutathione-dependent formaldehyde-activating enzyme from Phaeosphaeria nodorum (strain SN15 / ATCC MYA-4574 / FGSC 10173) (Glume blotch fungus).